A 321-amino-acid chain; its full sequence is Glucokinase (321 aa).

Gly8–Thr13 is a binding site for ATP.

It belongs to the bacterial glucokinase family.

It localises to the cytoplasm. The catalysed reaction is D-glucose + ATP = D-glucose 6-phosphate + ADP + H(+). This chain is Glucokinase, found in Enterobacter sp. (strain 638).